The sequence spans 483 residues: Regulatory protein ViaA (483 aa).

This sequence belongs to the ViaA family. As to quaternary structure, homodimer. Interacts with RavA.

The protein localises to the cytoplasm. Component of the RavA-ViaA chaperone complex, which may act on the membrane to optimize the function of some of the respiratory chains. ViaA stimulates the ATPase activity of RavA. The protein is Regulatory protein ViaA of Shigella flexneri.